Here is a 447-residue protein sequence, read N- to C-terminus: Kynureninase (447 aa).

Pyridoxal 5'-phosphate contacts are provided by residues Leu106, Thr107, 134–137, Asp220, His223, and Tyr245; that span reads FPSD. An N6-(pyridoxal phosphate)lysine modification is found at Lys246. Pyridoxal 5'-phosphate is bound by residues Trp275 and Asn303.

Belongs to the kynureninase family. In terms of assembly, homodimer. Pyridoxal 5'-phosphate serves as cofactor.

It localises to the cytoplasm. It carries out the reaction L-kynurenine + H2O = anthranilate + L-alanine + H(+). The catalysed reaction is 3-hydroxy-L-kynurenine + H2O = 3-hydroxyanthranilate + L-alanine + H(+). Its pathway is amino-acid degradation; L-kynurenine degradation; L-alanine and anthranilate from L-kynurenine: step 1/1. It functions in the pathway cofactor biosynthesis; NAD(+) biosynthesis; quinolinate from L-kynurenine: step 2/3. Functionally, catalyzes the cleavage of L-kynurenine (L-Kyn) and L-3-hydroxykynurenine (L-3OHKyn) into anthranilic acid (AA) and 3-hydroxyanthranilic acid (3-OHAA), respectively. The protein is Kynureninase of Eremothecium gossypii (strain ATCC 10895 / CBS 109.51 / FGSC 9923 / NRRL Y-1056) (Yeast).